A 166-amino-acid chain; its full sequence is Co-chaperone protein HscB homolog (166 aa).

A J domain is found at 3–75 (QYFTLFRIEP…IDRAAYLLKT (73 aa)).

It belongs to the HscB family. As to quaternary structure, interacts with HscA and stimulates its ATPase activity.

Functionally, co-chaperone involved in the maturation of iron-sulfur cluster-containing proteins. Seems to help targeting proteins to be folded toward HscA. The chain is Co-chaperone protein HscB homolog from Neisseria meningitidis serogroup C (strain 053442).